A 311-amino-acid polypeptide reads, in one-letter code: Oxygen-dependent coproporphyrinogen-III oxidase (311 aa).

S100 contributes to the substrate binding site. A divalent metal cation is bound by residues H104 and H114. The active-site Proton donor is the H114. N116–R118 lines the substrate pocket. Residues H153 and H183 each coordinate a divalent metal cation. The segment at Y248 to E283 is important for dimerization. G266–R268 serves as a coordination point for substrate.

This sequence belongs to the aerobic coproporphyrinogen-III oxidase family. Homodimer. A divalent metal cation is required as a cofactor.

The protein localises to the cytoplasm. It catalyses the reaction coproporphyrinogen III + O2 + 2 H(+) = protoporphyrinogen IX + 2 CO2 + 2 H2O. It participates in porphyrin-containing compound metabolism; protoporphyrin-IX biosynthesis; protoporphyrinogen-IX from coproporphyrinogen-III (O2 route): step 1/1. Its function is as follows. Involved in the heme biosynthesis. Catalyzes the aerobic oxidative decarboxylation of propionate groups of rings A and B of coproporphyrinogen-III to yield the vinyl groups in protoporphyrinogen-IX. The protein is Oxygen-dependent coproporphyrinogen-III oxidase of Legionella pneumophila (strain Corby).